A 762-amino-acid chain; its full sequence is Chondroadherin-like protein (762 aa).

The N-terminal stretch at 1 to 30 (MEGPRSSTHVPLVLPLLVLLLLAPARQAAA) is a signal peptide. An LRRNT 1 domain is found at 31-62 (QRCPQACICDNSRRHVACRYQNLTEVPDAIPE). N-linked (GlcNAc...) asparagine glycosylation is present at N52. LRR repeat units lie at residues 87–108 (HLTH…AFRG), 111–132 (RLLL…ALDG), 135–156 (SLRR…TFGA), 159–180 (ALAT…AFQG), 183–204 (RVRW…ALAG), 207–228 (ALRR…VLSQ), 231–252 (GLAR…DGLA), 255–276 (GLRE…AFAH), and 279–300 (RLHT…QGPG). The region spanning 310-359 (NPLWCGCQARPLLEWLARARVRSDGACQGPRRLRGEALDALRPWDLRCPG) is the LRRCT 1 domain. The interval 364–390 (EEEELEERAVAGPRAPPRGPPRGPGEE) is disordered. Pro residues predominate over residues 377 to 386 (RAPPRGPPRG). The LRRNT 2 domain maps to 387-425 (PGEERAVAPCPRACVCVPESRHSSCEGCGLQAVPRGFPS). A disulfide bond links C396 and C411. LRR repeat units lie at residues 426-447 (DTQL…AFPG), 450-471 (HLVS…ALAG), 474-495 (RLIY…ALEG), 498-519 (RLGY…ALRA), 522-543 (SLFS…DLGR), 546-566 (ALRW…GALG), 570-591 (ELEK…ALEG), 594-615 (ALLE…AFQP), 619-640 (SLQH…AFSG), and 644-665 (GLQS…PSLS). N-linked (GlcNAc...) asparagine glycosylation is present at N626. The LRRCT 2 domain maps to 675–724 (NPFHCDCQLLPLHRWLTGLNLRVGATCATPPNARGQRVKAAAAVFEDCPG). Intrachain disulfides connect C679–C722 and C681–C701. A compositionally biased stretch (basic residues) spans 728–745 (RKAKRTPASRPSARRTPI). The disordered stretch occupies residues 728 to 762 (RKAKRTPASRPSARRTPIKGRQCGADKVGKEKGRL).

It belongs to the small leucine-rich proteoglycan (SLRP) family. SLRP class IV subfamily. Associates with collagen and binds to collagen fibrils.

It localises to the secreted. The protein localises to the extracellular space. The protein resides in the extracellular matrix. Its function is as follows. Potential negative modulator of chondrocyte differentiation. Inhibits collagen fibrillogenesis in vitro. May influence chondrocyte's differentiation by acting on its cellular collagenous microenvironment. The sequence is that of Chondroadherin-like protein (CHADL) from Homo sapiens (Human).